A 179-amino-acid chain; its full sequence is MAKLHDYYKDEVVNKLMTEFNYNSVMQVPRVEKITLNMGVGEAIADKKLLDNAAADLTAISGQKPLITKARKSVAGFKIRQGYPIGCKVTLRGERMWEFFERLITIAVPRIRDFRGLSAKSFDGRGNYSMGVREQIIFPEIDYDKVDRVRGLDITITTTAKSDEEGRALLAAFDFPFRK.

It belongs to the universal ribosomal protein uL5 family. As to quaternary structure, part of the 50S ribosomal subunit; part of the 5S rRNA/L5/L18/L25 subcomplex. Contacts the 5S rRNA and the P site tRNA. Forms a bridge to the 30S subunit in the 70S ribosome.

In terms of biological role, this is one of the proteins that bind and probably mediate the attachment of the 5S RNA into the large ribosomal subunit, where it forms part of the central protuberance. In the 70S ribosome it contacts protein S13 of the 30S subunit (bridge B1b), connecting the 2 subunits; this bridge is implicated in subunit movement. Contacts the P site tRNA; the 5S rRNA and some of its associated proteins might help stabilize positioning of ribosome-bound tRNAs. The chain is Large ribosomal subunit protein uL5 from Salmonella agona (strain SL483).